Consider the following 217-residue polypeptide: tRNA (guanine-N(7)-)-methyltransferase (217 aa).

S-adenosyl-L-methionine is bound by residues Glu48, Glu73, Asn100, and Asp123. Residue Asp123 is part of the active site. Substrate-binding residues include Lys127 and Asp159.

It belongs to the class I-like SAM-binding methyltransferase superfamily. TrmB family.

It carries out the reaction guanosine(46) in tRNA + S-adenosyl-L-methionine = N(7)-methylguanosine(46) in tRNA + S-adenosyl-L-homocysteine. The protein operates within tRNA modification; N(7)-methylguanine-tRNA biosynthesis. Catalyzes the formation of N(7)-methylguanine at position 46 (m7G46) in tRNA. This chain is tRNA (guanine-N(7)-)-methyltransferase, found in Leptospira interrogans serogroup Icterohaemorrhagiae serovar copenhageni (strain Fiocruz L1-130).